We begin with the raw amino-acid sequence, 306 residues long: Protoheme IX farnesyltransferase (306 aa).

A run of 9 helical transmembrane segments spans residues 28-48 (LGLVQGNLIPAFAGAFIAIML), 53-73 (FLSSIPELLTMLFGTTLIMAG), 105-125 (ASILQLSLVLMIVGEMLLFTI), 127-147 (IETGIIGFLGIFGYVVLYSVW), 156-176 (TIIGSFPGAIPPLVGYAAIEP), 182-202 (AWMLFVIMFIWQPAHFYALAI), 227-244 (LSMLFWVMLLLPTPFFMQ), 246-266 (LGTVFMVLASVLNLGWLLLAI), and 283-303 (FVYSLNYLMIFFVMIVVVTLI).

Belongs to the UbiA prenyltransferase family. Protoheme IX farnesyltransferase subfamily. In terms of assembly, interacts with CtaA.

It is found in the cell membrane. It carries out the reaction heme b + (2E,6E)-farnesyl diphosphate + H2O = Fe(II)-heme o + diphosphate. It functions in the pathway porphyrin-containing compound metabolism; heme O biosynthesis; heme O from protoheme: step 1/1. Its function is as follows. Converts heme B (protoheme IX) to heme O by substitution of the vinyl group on carbon 2 of heme B porphyrin ring with a hydroxyethyl farnesyl side group. This is Protoheme IX farnesyltransferase from Macrococcus caseolyticus (strain JCSC5402) (Macrococcoides caseolyticum).